A 105-amino-acid polypeptide reads, in one-letter code: Urease subunit beta (105 aa).

The protein belongs to the urease beta subunit family. In terms of assembly, heterotrimer of UreA (gamma), UreB (beta) and UreC (alpha) subunits. Three heterotrimers associate to form the active enzyme.

It is found in the cytoplasm. The catalysed reaction is urea + 2 H2O + H(+) = hydrogencarbonate + 2 NH4(+). Its pathway is nitrogen metabolism; urea degradation; CO(2) and NH(3) from urea (urease route): step 1/1. This chain is Urease subunit beta, found in Pseudomonas putida (strain W619).